The chain runs to 908 residues: PTS system glucose-specific EIICBA component (908 aa).

In terms of domain architecture, PTS EIIC type-1; first part spans 1–264 (MQISLVKIRN…YAPLWYTSAG (264 aa)). 5 helical membrane passes run 31-51 (LMIP…GDAI), 71-91 (GGNV…AITF), 100-120 (FSAF…IIPV), 155-175 (VFGG…FYAI), and 189-209 (FVPI…LMVW). A unknown region spans residues 265 to 450 (GSLQEIANQQ…VSQFTVAVPS (186 aa)). A PTS EIIC type-1; second part domain is found at 451-602 (LNPAQYSQGK…FNLATPGRGG (152 aa)). The next 5 helical transmembrane spans lie at 459–479 (GKFP…ILAA), 487–507 (ASSI…TEPF), 509–529 (FTFL…LAAV), 536–556 (LLSA…ILYG), and 571–591 (VPII…FLTI). In terms of domain architecture, PTS EIIB type-1 spans 631–713 (QIEAGMLLRA…QDIIQGKVNW (83 aa)). C653 functions as the Phosphocysteine intermediate; for EIIB activity in the catalytic mechanism. In terms of domain architecture, PTS EIIA type-1 spans 762 to 875 (DDTFKNRLVG…DPITPFIVMQ (114 aa)). H815 (tele-phosphohistidine intermediate; for EIIA activity) is an active-site residue.

The protein resides in the cell membrane. It catalyses the reaction N(pros)-phospho-L-histidyl-[protein] + D-glucose(out) = D-glucose 6-phosphate(in) + L-histidyl-[protein]. In terms of biological role, the phosphoenolpyruvate-dependent sugar phosphotransferase system (sugar PTS), a major carbohydrate active transport system, catalyzes the phosphorylation of incoming sugar substrates concomitantly with their translocation across the cell membrane. This system is involved in glucose transport. This Mycoplasma genitalium (strain ATCC 33530 / DSM 19775 / NCTC 10195 / G37) (Mycoplasmoides genitalium) protein is PTS system glucose-specific EIICBA component (ptsG).